Reading from the N-terminus, the 121-residue chain is Small ribosomal subunit protein uS13 (121 aa).

The disordered stretch occupies residues valine 97 to lysine 121. Over residues glutamine 100–lysine 121 the composition is skewed to basic residues.

This sequence belongs to the universal ribosomal protein uS13 family. As to quaternary structure, part of the 30S ribosomal subunit. Forms a loose heterodimer with protein S19. Forms two bridges to the 50S subunit in the 70S ribosome.

Located at the top of the head of the 30S subunit, it contacts several helices of the 16S rRNA. In the 70S ribosome it contacts the 23S rRNA (bridge B1a) and protein L5 of the 50S subunit (bridge B1b), connecting the 2 subunits; these bridges are implicated in subunit movement. Contacts the tRNAs in the A and P-sites. The sequence is that of Small ribosomal subunit protein uS13 from Synechococcus sp. (strain CC9311).